A 500-amino-acid chain; its full sequence is ADP,ATP carrier protein 5 (500 aa).

11 consecutive transmembrane segments (helical) span residues 26-46 (LGKFIPISALMFCILFNQNIL), 62-82 (IAGFAKVYCVTPVAALFVIIY), 94-114 (IFYYLSAFFISCFILFAFVIY), 149-169 (YIVYYSLAELWPNIFYVLLFW), 184-204 (FYTLFSLFGNSSLILVGFLMM), 224-244 (ITLVQVSTTIIAIVAIICCLL), 287-307 (LWLLLICSAAFGFAINLVEAV), 328-348 (LYILWTGVAIIVMTIIGNNVM), 357-377 (AVISPVIIMVTGVLFFGLIVF), 381-401 (ILSLFDGAILMSPLALAVSIG), and 469-489 (SISPILMVVFTFVCFAWIYAV).

Belongs to the ADP/ATP translocase tlc family.

Its subcellular location is the cell membrane. Functionally, provides the rickettsial cell with host ATP in exchange for rickettsial ADP. This is an obligate exchange system. This energy acquiring activity is an important component of rickettsial parasitism. This chain is ADP,ATP carrier protein 5 (tlcE), found in Rickettsia prowazekii (strain Madrid E).